The primary structure comprises 288 residues: Structure-specific endonuclease subunit SLX1 (288 aa).

The region spanning 10–93 (DFYCSYLLRS…QHSYKTRFIE (84 aa)) is the GIY-YIG domain. The segment at 209 to 265 (CMICDKKIDYIHDEGTQMVGFCSDDECDFLSCLSCLYKEFTKNSKQIIPKSGHCPNC) adopts an SLX1-type zinc-finger fold.

Belongs to the SLX1 family. In terms of assembly, forms a heterodimer with SLX4. A divalent metal cation is required as a cofactor.

Its subcellular location is the nucleus. Its function is as follows. Catalytic subunit of the SLX1-SLX4 structure-specific endonuclease that resolves DNA secondary structures generated during DNA repair and recombination. Has endonuclease activity towards branched DNA substrates, introducing single-strand cuts in duplex DNA close to junctions with ss-DNA. The chain is Structure-specific endonuclease subunit SLX1 from Kluyveromyces lactis (strain ATCC 8585 / CBS 2359 / DSM 70799 / NBRC 1267 / NRRL Y-1140 / WM37) (Yeast).